The following is a 362-amino-acid chain: MANPVGFRFRPTDGEIVDIYLRPKNLESNTSHVDEVISTVDICSFDPWDLPSHSRMKTRDQVWYFFGRKENKYGKGDRQIRKTKSGFWKKTGVTMDIMRKTGDREKIGEKRVLVFKNHGGSKSDWAMHEYHATFSSPNQIMTYTLCKVKFKGERREFSVATGSGIKHTHSLIPPTNNSGVLSVETEGSLFHSQESQNPSQFSGFLDVDALDRDFCNILSDDFKGFFNDDDEQSKIVSMQDDRNNHTPQKPLTGVFSDHSTDGSDSDPISATTISIQTLSTCPSFGSSNPLYQITDLQESPNSIKLVSLAQEVSKTPGTGIDNDAQGTEIGEHKLGQETIKNKRAGFFHRMIQKFVKKIHLRT.

The region spanning 3–151 is the NAC domain; that stretch reads NPVGFRFRPT…TYTLCKVKFK (149 aa). A DNA-binding region spans residues 107–157; that stretch reads IGEKRVLVFKNHGGSKSDWAMHEYHATFSSPNQIMTYTLCKVKFKGERREF. The interval 240–266 is disordered; the sequence is DDRNNHTPQKPLTGVFSDHSTDGSDSD.

It is found in the nucleus. This chain is NAC domain-containing protein 5 (NAC005), found in Arabidopsis thaliana (Mouse-ear cress).